A 288-amino-acid chain; its full sequence is 4-diphosphocytidyl-2-C-methyl-D-erythritol kinase (288 aa).

Lysine 8 is an active-site residue. 92–102 serves as a coordination point for ATP; it reads PVAAGMAGGST. Residue aspartate 134 is part of the active site.

This sequence belongs to the GHMP kinase family. IspE subfamily.

It catalyses the reaction 4-CDP-2-C-methyl-D-erythritol + ATP = 4-CDP-2-C-methyl-D-erythritol 2-phosphate + ADP + H(+). Its pathway is isoprenoid biosynthesis; isopentenyl diphosphate biosynthesis via DXP pathway; isopentenyl diphosphate from 1-deoxy-D-xylulose 5-phosphate: step 3/6. In terms of biological role, catalyzes the phosphorylation of the position 2 hydroxy group of 4-diphosphocytidyl-2C-methyl-D-erythritol. In Clostridium perfringens (strain 13 / Type A), this protein is 4-diphosphocytidyl-2-C-methyl-D-erythritol kinase.